A 95-amino-acid polypeptide reads, in one-letter code: Aspartyl/glutamyl-tRNA(Asn/Gln) amidotransferase subunit C (95 aa).

Belongs to the GatC family. In terms of assembly, heterotrimer of A, B and C subunits.

The enzyme catalyses L-glutamyl-tRNA(Gln) + L-glutamine + ATP + H2O = L-glutaminyl-tRNA(Gln) + L-glutamate + ADP + phosphate + H(+). The catalysed reaction is L-aspartyl-tRNA(Asn) + L-glutamine + ATP + H2O = L-asparaginyl-tRNA(Asn) + L-glutamate + ADP + phosphate + 2 H(+). In terms of biological role, allows the formation of correctly charged Asn-tRNA(Asn) or Gln-tRNA(Gln) through the transamidation of misacylated Asp-tRNA(Asn) or Glu-tRNA(Gln) in organisms which lack either or both of asparaginyl-tRNA or glutaminyl-tRNA synthetases. The reaction takes place in the presence of glutamine and ATP through an activated phospho-Asp-tRNA(Asn) or phospho-Glu-tRNA(Gln). The protein is Aspartyl/glutamyl-tRNA(Asn/Gln) amidotransferase subunit C of Methylococcus capsulatus (strain ATCC 33009 / NCIMB 11132 / Bath).